The sequence spans 361 residues: Tyrosine--tRNA ligase (361 aa).

5 residues coordinate L-tyrosine: Tyr-36, Tyr-162, Gln-166, Asp-169, and Gln-184. Residues 236–240 (KMSKS) carry the 'KMSKS' region motif. Lys-239 contacts ATP.

This sequence belongs to the class-I aminoacyl-tRNA synthetase family. TyrS type 4 subfamily. As to quaternary structure, homodimer.

It is found in the cytoplasm. It catalyses the reaction tRNA(Tyr) + L-tyrosine + ATP = L-tyrosyl-tRNA(Tyr) + AMP + diphosphate + H(+). Catalyzes the attachment of tyrosine to tRNA(Tyr) in a two-step reaction: tyrosine is first activated by ATP to form Tyr-AMP and then transferred to the acceptor end of tRNA(Tyr). The sequence is that of Tyrosine--tRNA ligase from Saccharolobus islandicus (strain M.14.25 / Kamchatka #1) (Sulfolobus islandicus).